The chain runs to 164 residues: Putative pre-16S rRNA nuclease (164 aa).

The protein belongs to the YqgF nuclease family.

Its subcellular location is the cytoplasm. Could be a nuclease involved in processing of the 5'-end of pre-16S rRNA. The sequence is that of Putative pre-16S rRNA nuclease from Rhizobium johnstonii (strain DSM 114642 / LMG 32736 / 3841) (Rhizobium leguminosarum bv. viciae).